The sequence spans 590 residues: Monoterepene synthase TPS1, chloropastic (590 aa).

The N-terminal 42 residues, 1–42, are a transit peptide targeting the chloroplast; it reads MALNTFLHFPPCSLSSFSCAVPKLPLAIFHKTMARQIRCPRA. R304, D341, D345, R483, and D486 together coordinate (2E)-geranyl diphosphate. D341 and D345 together coordinate Mg(2+). Residues 341 to 345 carry the DDXXD motif motif; the sequence is DDMYD. Positions 486, 490, and 494 each coordinate Mg(2+).

Belongs to the terpene synthase family. Tpsb subfamily. Monomer. Mg(2+) serves as cofactor.

Its subcellular location is the plastid. It is found in the chloroplast. The enzyme catalyses (2E)-geranyl diphosphate = beta-thujene + diphosphate. The catalysed reaction is (2E)-geranyl diphosphate = sabinene + diphosphate. It carries out the reaction (2E)-geranyl diphosphate = beta-pinene + diphosphate. It catalyses the reaction (2E)-geranyl diphosphate = alpha-terpinene + diphosphate. It participates in secondary metabolite biosynthesis; terpenoid biosynthesis. Functionally, monoterpene synthase involved in the biosynthesis of volatile organic compounds. Mediates the conversion of (2E)-geranyl diphosphate (GPP) into beta-thujene, sabinene, beta-pinene and alpha-terpinene. Does not use (2E,6E)-farnesyl diphosphate (FPP) as substrate. The polypeptide is Monoterepene synthase TPS1, chloropastic (Cananga odorata (Ylang-ylang tree)).